We begin with the raw amino-acid sequence, 211 residues long: Probable nicotinate-nucleotide adenylyltransferase (211 aa).

It belongs to the NadD family.

The catalysed reaction is nicotinate beta-D-ribonucleotide + ATP + H(+) = deamido-NAD(+) + diphosphate. It participates in cofactor biosynthesis; NAD(+) biosynthesis; deamido-NAD(+) from nicotinate D-ribonucleotide: step 1/1. Catalyzes the reversible adenylation of nicotinate mononucleotide (NaMN) to nicotinic acid adenine dinucleotide (NaAD). This Legionella pneumophila (strain Corby) protein is Probable nicotinate-nucleotide adenylyltransferase.